A 95-amino-acid chain; its full sequence is Protein TusB (95 aa).

The protein belongs to the DsrH/TusB family. As to quaternary structure, heterohexamer, formed by a dimer of trimers. The hexameric TusBCD complex contains 2 copies each of TusB, TusC and TusD. The TusBCD complex interacts with TusE.

Its subcellular location is the cytoplasm. Its function is as follows. Part of a sulfur-relay system required for 2-thiolation of 5-methylaminomethyl-2-thiouridine (mnm(5)s(2)U) at tRNA wobble positions. The protein is Protein TusB of Escherichia coli (strain ATCC 8739 / DSM 1576 / NBRC 3972 / NCIMB 8545 / WDCM 00012 / Crooks).